Reading from the N-terminus, the 386-residue chain is Coproporphyrinogen-III oxidase 1, chloroplastic (386 aa).

Residues 1 to 48 (MASHSSTLLSSPTFAPFSSHRLHYSPNPSTLRFSRPIRNKPNLALRCS) constitute a chloroplast transit peptide. An important for dimerization region spans residues 125-134 (VLQDGNVFEK). Residue S174 coordinates substrate. H188 (proton donor) is an active-site residue. Substrate-binding positions include 190-192 (NYR) and 344-349 (GGRIES). Residues 326–361 (YVEFNLVYDRGTTFGLKTGGRIESILVSLPLSARWE) form an important for dimerization region.

Belongs to the aerobic coproporphyrinogen-III oxidase family. As to quaternary structure, homodimer. In terms of tissue distribution, expressed in cotyledons, leaves and roots.

The protein resides in the plastid. It is found in the chloroplast. It carries out the reaction coproporphyrinogen III + O2 + 2 H(+) = protoporphyrinogen IX + 2 CO2 + 2 H2O. It functions in the pathway porphyrin-containing compound metabolism; protoporphyrin-IX biosynthesis; protoporphyrinogen-IX from coproporphyrinogen-III (O2 route): step 1/1. It participates in porphyrin-containing compound metabolism; chlorophyll biosynthesis. In terms of biological role, key enzyme in heme biosynthesis. Catalyzes the oxidative decarboxylation of propionic acid side chains of rings A and B of coproporphyrinogen III. The chain is Coproporphyrinogen-III oxidase 1, chloroplastic (CPX1) from Arabidopsis thaliana (Mouse-ear cress).